We begin with the raw amino-acid sequence, 291 residues long: Formamidopyrimidine-DNA glycosylase (291 aa).

Proline 2 serves as the catalytic Schiff-base intermediate with DNA. Glutamate 3 serves as the catalytic Proton donor. Lysine 60 acts as the Proton donor; for beta-elimination activity in catalysis. Residues histidine 97, arginine 116, and arginine 161 each coordinate DNA. Residues 246–280 form an FPG-type zinc finger; sequence WVYNRAGEPCRVCGMPIQRIRLAGRSSHFCSECQT. Arginine 270 serves as the catalytic Proton donor; for delta-elimination activity.

The protein belongs to the FPG family. As to quaternary structure, monomer. It depends on Zn(2+) as a cofactor.

It carries out the reaction Hydrolysis of DNA containing ring-opened 7-methylguanine residues, releasing 2,6-diamino-4-hydroxy-5-(N-methyl)formamidopyrimidine.. It catalyses the reaction 2'-deoxyribonucleotide-(2'-deoxyribose 5'-phosphate)-2'-deoxyribonucleotide-DNA = a 3'-end 2'-deoxyribonucleotide-(2,3-dehydro-2,3-deoxyribose 5'-phosphate)-DNA + a 5'-end 5'-phospho-2'-deoxyribonucleoside-DNA + H(+). Involved in base excision repair of DNA damaged by oxidation or by mutagenic agents. Acts as a DNA glycosylase that recognizes and removes damaged bases. Has a preference for oxidized purines, such as 7,8-dihydro-8-oxoguanine (8-oxoG). Has AP (apurinic/apyrimidinic) lyase activity and introduces nicks in the DNA strand. Cleaves the DNA backbone by beta-delta elimination to generate a single-strand break at the site of the removed base with both 3'- and 5'-phosphates. This is Formamidopyrimidine-DNA glycosylase from Nostoc punctiforme (strain ATCC 29133 / PCC 73102).